Reading from the N-terminus, the 262-residue chain is Oxidoreductase AgnL4 (262 aa).

The protein belongs to the avfA family.

Its pathway is secondary metabolite biosynthesis. Oxidoreductase; part of the gene cluster that mediates the biosynthesis of agnestins, dihydroxy-xanthone metabolites. The pathway begins with the assembly and cyclization of atrochrysone thioester by the non-reducing polyketide synthase Agnpks1. The atrochrysone carboxyl ACP thioesterase AgnL7 then breaks the thioester bond and releases the atrochrysone carboxylic acid as the first enzyme-free intermediate. The decarboxylase AgnL1 then catalyzes the concerted decarboxylation-elimination required to convert atochrysone carboxylic acid into emodin anthrone, which is further oxidized to emodin by the anthrone oxygenase AgnL2. Emodin then undergoes reduction catalyzed by the oxidoreductase AgnL4 to yield the dihydroquinone tautomer which is the substrate for reduction by the short chain dehydrogenase AgnL6 reduction to produce hydroxyketone, followed by AgnL8 dehydration and likely spontaneous autoxidation to chrysophanol. Baeyer-Villiger oxidation by the oxidase AgnL3 leads to monodictyphenone via cleavage of the C-10/C-10a bond of chrysophanol. Alternative cleavage at the C-4a/C-10 bond of chrysophanol also leads to the formation some cephalone F. Further conversion to agnestins A and B, requires reduction to dihydro-monodictyphenone, oxidation to agnestin C probably via an epoxide, and rearrangement to either agnestin A or agnestin B directly, although agnestin A or agnestin B can also interconvert. Within the cluster, AgnR1 is the only unassigned oxidoreductase present which could be involved in this conversion. However, AgnR1 seems not to be involved in this step, and thus genes involved in the proposed oxidation/reduction may be located elsewhere on the genome. Further agnestin A derivatives are probably formed by spontaneous decarboxylations, dehydrations and methanolysis reactions. The protein is Oxidoreductase AgnL4 of Paecilomyces divaricatus (Penicillium divaricatum).